The following is a 71-amino-acid chain: Equinin B (71 aa).

The signal sequence occupies residues 1–11 (MAVIMVDQAEG). Residues 46–71 (GDEPQQMALDDESDPLVILPNNYNDY) constitute a propeptide that is removed on maturation.

Post-translationally, contains 4 disulfide bonds.

It localises to the secreted. Its subcellular location is the target cell membrane. Its function is as follows. Antimicrobial peptide with inhibitory activity against both Gram-positive and Gram-negative bacteria (E.coli (MIC=0.25 ug/ml), M.lysodeikticus (MIC=0.25 ug/ml), and V.alginolyticus (MIC=0.25 ug/ml)). Does not show hemolytic activity. The chain is Equinin B from Actinia equina (Beadlet anemone).